We begin with the raw amino-acid sequence, 479 residues long: 5-hydroxytryptamine receptor 7 (479 aa).

At 1-83 the chain is on the extracellular side; that stretch reads MMDVNSSGRP…INYGRVEKVV (83 aa). 2 N-linked (GlcNAc...) asparagine glycosylation sites follow: asparagine 5 and asparagine 66. Residues 84–108 traverse the membrane as a helical segment; sequence IGSILTLITLLTIAGNCLVVISVCF. The Cytoplasmic portion of the chain corresponds to 109–118; sequence VKKLRQPSNY. The helical transmembrane segment at 119-140 threads the bilayer; the sequence is LIVSLALADLSVAVAVMPFVSV. Topologically, residues 141 to 152 are extracellular; the sequence is TDLIGGKWIFGH. Residues 153–178 traverse the membrane as a helical segment; that stretch reads FFCNVFIAMDVMCCTASIMTLCVISI. An intrachain disulfide couples cysteine 155 to cysteine 231. Aspartate 162 contacts serotonin. At 179–198 the chain is on the cytoplasmic side; it reads DRYLGITRPLTYPVRQNGKC. A helical membrane pass occupies residues 199 to 219; sequence MAKMILSVWLLSASITLPPLF. The Extracellular portion of the chain corresponds to 220–237; it reads GWAQNVNDDKVCLISQDF. Residues 238-260 traverse the membrane as a helical segment; it reads GYTIYSTAVAFYIPMSVMLFMYY. The Cytoplasmic segment spans residues 261–326; the sequence is QIYKAARKSA…SIFKREQKAA (66 aa). Residues 327 to 352 form a helical membrane-spanning segment; sequence TTLGIIVGAFTVCWLPFFLLSTARPF. Over 353 to 363 the chain is Extracellular; that stretch reads ICGTSCSCIPL. A helical membrane pass occupies residues 364 to 387; sequence WVERTFLWLGYANSLINPFIYAFF. The Cytoplasmic segment spans residues 388–479; sequence NRDLRTTYRS…TVEKKVMIHD (92 aa). A lipid anchor (S-palmitoyl cysteine) is attached at cysteine 401.

The protein belongs to the G-protein coupled receptor 1 family. Predominant isoform in spleen, caudate and hippocampus. In terms of tissue distribution, expressed at lower levels. As to expression, minor isoform in terms of expression.

Its subcellular location is the cell membrane. Functionally, G-protein coupled receptor for 5-hydroxytryptamine (serotonin), a biogenic hormone that functions as a neurotransmitter, a hormone and a mitogen. Ligand binding causes a conformation change that triggers signaling via guanine nucleotide-binding proteins (G proteins) and modulates the activity of downstream effectors. HTR7 is coupled to G(s) G alpha proteins and mediates activation of adenylate cyclase activity. The chain is 5-hydroxytryptamine receptor 7 from Homo sapiens (Human).